The sequence spans 194 residues: Small ribosomal subunit protein uS5 (194 aa).

The 64-residue stretch at 26 to 89 (LEEKVVEIRR…ADAKKHLIRV (64 aa)) folds into the S5 DRBM domain.

It belongs to the universal ribosomal protein uS5 family. In terms of assembly, part of the 30S ribosomal subunit. Contacts proteins S4 and S8.

Functionally, with S4 and S12 plays an important role in translational accuracy. Located at the back of the 30S subunit body where it stabilizes the conformation of the head with respect to the body. The protein is Small ribosomal subunit protein uS5 of Persephonella marina (strain DSM 14350 / EX-H1).